The sequence spans 873 residues: Mitogen-activated protein kinase kinase kinase kinase 3 (873 aa).

Met-1 is modified (N-acetylmethionine). Residues 16–273 (FELIQRIGSG…AEKLLQHPFV (258 aa)) form the Protein kinase domain. ATP is bound by residues 22–30 (IGSGTYGDV) and Lys-45. The active-site Proton acceptor is the Asp-136. A phosphoserine mark is found at Ser-329 and Ser-377. A disordered region spans residues 389-518 (AHLEDDEGDD…KPISNGLPPT (130 aa)). Residues 452–466 (HVPPRPPPPRLPPQK) show a composition bias toward pro residues. A compositionally biased stretch (polar residues) spans 487 to 499 (VHQQQSEQRGTNL). In terms of domain architecture, CNH spans 535–846 (PLKIHCATSW…IFRLLGSDRV (312 aa)).

It belongs to the protein kinase superfamily. STE Ser/Thr protein kinase family. STE20 subfamily. In terms of assembly, interacts with SH3GL2. Interaction appears to regulate MAP4K3-mediated JNK activation. Mg(2+) is required as a cofactor.

The enzyme catalyses L-seryl-[protein] + ATP = O-phospho-L-seryl-[protein] + ADP + H(+). It carries out the reaction L-threonyl-[protein] + ATP = O-phospho-L-threonyl-[protein] + ADP + H(+). Its function is as follows. Serine/threonine kinase that plays a role in the response to environmental stress. Appears to act upstream of the JUN N-terminal pathway. Activator of the Hippo signaling pathway which plays a pivotal role in organ size control and tumor suppression by restricting proliferation and promoting apoptosis. MAP4Ks act in parallel to and are partially redundant with STK3/MST2 and STK4/MST2 in the phosphorylation and activation of LATS1/2, and establish MAP4Ks as components of the expanded Hippo pathway. In Rattus norvegicus (Rat), this protein is Mitogen-activated protein kinase kinase kinase kinase 3 (Map4k3).